Reading from the N-terminus, the 116-residue chain is Somatostatin (116 aa).

Residues 1–24 (MLSCRLQCALAALSIVLALGGVTG) form the signal peptide. Positions 25–88 (APSDPRLRQF…QDEMRLELQR (64 aa)) are excised as a propeptide. Position 43 is an alanine amide (Ala-43). The interval 62–99 (QTENDALEPEDLSQAAEQDEMRLELQRSANSNPAMAPR) is disordered. An intrachain disulfide couples Cys-105 to Cys-116.

Belongs to the somatostatin family. In terms of processing, C-terminal amidation of the neuronostatin peptide is required for its biological activity, including for the regulation of mean arterial pressure. In terms of tissue distribution, expressed in the pancreas and the spleen (at protein level).

It is found in the secreted. Functionally, inhibits the secretion of pituitary hormones, including that of growth hormone/somatotropin (GH1), PRL, ACTH, luteinizing hormone (LH) and TSH. Also impairs ghrelin- and GnRH-stimulated secretion of GH1 and LH; the inhibition of ghrelin-stimulated secretion of GH1 can be further increased by neuronostatin. Its function is as follows. May enhance low-glucose-induced glucagon release by pancreatic alpha cells. This effect may be mediated by binding to GPR107 and PKA activation. May regulate cardiac contractile function. May compromise cardiomyocyte viability. In the central nervous system, may impair memory retention and may affect hippocampal excitability. May also have anxiolytic and anorexigenic effects. May play a role in arterial pressure regulation. May inhibit basal, but not ghrelin- or GnRH-stimulated secretion of GH1 or LH, but does not affect the release of other pituitary hormones, including PRL, ACTH, FSH or TSH. Potentiates inhibitory action of somatostatin on ghrelin-stimulated secretion of GH1, but not that on GnRH-stimulated secretion of LH. The protein is Somatostatin (SST) of Sus scrofa (Pig).